We begin with the raw amino-acid sequence, 465 residues long: E3 ubiquitin-protein ligase ORTHRUS-LIKE 1 (465 aa).

The interval 31–69 (TSLSSPLDRSGDVDPLPVSDESGGSKADESMTDADETKK) is disordered. The segment at 109–148 (CSLCNQLPDRPVTILCGHNFCLKCFDKWIDQGNQICATCR) adopts an RING-type zinc-finger fold. The YDG domain occupies 233–374 (VRNQGVLVGE…FKVCRYLFVR (142 aa)). The helical transmembrane segment at 442–462 (MAMTCLLLFVLIILVGSSSIL) threads the bilayer.

The protein localises to the nucleus. The protein resides in the membrane. The enzyme catalyses S-ubiquitinyl-[E2 ubiquitin-conjugating enzyme]-L-cysteine + [acceptor protein]-L-lysine = [E2 ubiquitin-conjugating enzyme]-L-cysteine + N(6)-ubiquitinyl-[acceptor protein]-L-lysine.. It participates in protein modification; protein ubiquitination. In terms of biological role, E3 ubiquitin-protein ligase. May participate in methylation-dependent transcriptional regulation. Mediates ubiquitination with the E2 ubiquitin-conjugating enzyme UBC11. The protein is E3 ubiquitin-protein ligase ORTHRUS-LIKE 1 (ORTHL) of Arabidopsis thaliana (Mouse-ear cress).